The primary structure comprises 97 residues: U-reduvitoxin-Pr11a (97 aa).

Residues 1-20 form the signal peptide; it reads MKTALFLVFALAFIAVEGKM. 2 Pacifastin domains span residues 22-59 and 62-97; these read RACSKPGQTVLAPDGCNHCRCSEKGILMACTKMMCPPR and EKSCKPGTTFKHKDGCNTCKCSDDGKNALCTSKLCL. Intrachain disulfides connect Cys24-Cys42, Cys37-Cys56, and Cys40-Cys51. The tract at residues 57 to 59 is pro-Pro-Arg motif necessary for proteolytic processing; the sequence is PPR. 3 cysteine pairs are disulfide-bonded: Cys65–Cys82, Cys77–Cys96, and Cys80–Cys91.

This sequence belongs to the protease inhibitor I19 family. As to expression, expressed by the venom gland.

The protein resides in the secreted. Its function is as follows. Inhibits trypsin activity and prophenoloxidase (PPO) activation, an enzyme essential for both clotting and insect innate immune responses. It does not inhibit activity of chymotrypsin and protease K, and has no effect on phenoloxidase (PO) activity. The protein is U-reduvitoxin-Pr11a of Platymeris rhadamanthus (Red spot assassin bug).